We begin with the raw amino-acid sequence, 61 residues long: Small ribosomal subunit protein uS14B (61 aa).

Residues Cys24, Cys27, Cys40, and Cys43 each contribute to the Zn(2+) site.

The protein belongs to the universal ribosomal protein uS14 family. Zinc-binding uS14 subfamily. In terms of assembly, part of the 30S ribosomal subunit. Contacts proteins S3 and S10. The cofactor is Zn(2+).

Its function is as follows. Binds 16S rRNA, required for the assembly of 30S particles and may also be responsible for determining the conformation of the 16S rRNA at the A site. The chain is Small ribosomal subunit protein uS14B from Mycobacterium bovis (strain ATCC BAA-935 / AF2122/97).